The chain runs to 488 residues: Phenylalanine--tRNA ligase alpha subunit (488 aa).

Residues T315, 354 to 356 (QLD), F394, and F419 contribute to the L-phenylalanine site.

Belongs to the class-II aminoacyl-tRNA synthetase family. Phe-tRNA synthetase alpha subunit type 2 subfamily. Tetramer of two alpha and two beta subunits. It depends on Mg(2+) as a cofactor.

The protein resides in the cytoplasm. It carries out the reaction tRNA(Phe) + L-phenylalanine + ATP = L-phenylalanyl-tRNA(Phe) + AMP + diphosphate + H(+). This Pyrobaculum arsenaticum (strain DSM 13514 / JCM 11321 / PZ6) protein is Phenylalanine--tRNA ligase alpha subunit.